Reading from the N-terminus, the 87-residue chain is Large ribosomal subunit protein bL27 (87 aa).

Belongs to the bacterial ribosomal protein bL27 family.

The chain is Large ribosomal subunit protein bL27 from Renibacterium salmoninarum (strain ATCC 33209 / DSM 20767 / JCM 11484 / NBRC 15589 / NCIMB 2235).